A 416-amino-acid polypeptide reads, in one-letter code: Enterobactin exporter EntS (416 aa).

Residues 1-21 (MNKQSWLLNLSLLKTHPAFRA) lie on the Cytoplasmic side of the membrane. A helical transmembrane segment spans residues 22-42 (VFLARFISIVSLGLLGVAVPV). At 43–55 (QIQMMTHSTWQVG) the chain is on the periplasmic side. A helical membrane pass occupies residues 56–76 (LSVTLTGGAMFVGLMVGGVLA). Residues 77 to 83 (DRYERKK) lie on the Cytoplasmic side of the membrane. A helical transmembrane segment spans residues 84–104 (VILLARGTCGIGFIGLCLNAL). Over 105–109 (LPEPS) the chain is Periplasmic. A helical membrane pass occupies residues 110 to 130 (LLAIYLLGLWDGFFASLGVTA). The Cytoplasmic portion of the chain corresponds to 131-156 (LLAATPALVGRENLMQAGAITMLTVR). Residues 157–177 (LGSVISPMIGGLLLATGGVAW) traverse the membrane as a helical segment. Position 178 (asparagine 178) is a topological domain, periplasmic. The chain crosses the membrane as a helical span at residues 179–199 (YGLAAAGTFITLLPLLSLPAL). Over 200 to 218 (PPPPQPREHPLKSLLAGFR) the chain is Cytoplasmic. The helical transmembrane segment at 219–239 (FLLASPLVGGIALLGGLLTMA) threads the bilayer. The Periplasmic segment spans residues 240–256 (SAVRVLYPALADNWQMS). A helical transmembrane segment spans residues 257-277 (AAQIGFLYAAIPLGAAIGALT). Residues 278–287 (SGKLAHSARP) are Cytoplasmic-facing. A helical transmembrane segment spans residues 288–307 (GLLMLLSTLGSFLAIGLFGL). Residues 308–313 (MPMWIL) lie on the Periplasmic side of the membrane. A helical membrane pass occupies residues 314-336 (GVICLALFGWLSAVSSLLQYTML). Residues 337–356 (QTQTPEAMLGRINGLWTAQN) are Cytoplasmic-facing. A helical transmembrane segment spans residues 357-377 (VTGDAIGAALLGGLGAMMTPV). Alanine 378 is a topological domain (periplasmic). The chain crosses the membrane as a helical span at residues 379-399 (SASASGFGLLIIGVLLLLVLV). Residues 400–416 (ELRRFRQTPPQVTASDS) lie on the Cytoplasmic side of the membrane.

This sequence belongs to the major facilitator superfamily. EntS (TC 2.A.1.38) family.

It localises to the cell inner membrane. In terms of biological role, component of an export pathway for enterobactin. This Escherichia coli O81 (strain ED1a) protein is Enterobactin exporter EntS.